Consider the following 153-residue polypeptide: Interleukin-2 (153 aa).

The N-terminal stretch at 1-20 (MYKVQLLSCIALTLALLTSS) is a signal peptide. O-linked (GalNAc...) threonine glycosylation is present at T23. Residues C78 and C125 are joined by a disulfide bond. An N-linked (GlcNAc...) asparagine glycan is attached at N111.

The protein belongs to the IL-2 family.

The protein resides in the secreted. In terms of biological role, cytokine produced by activated CD4-positive helper T-cells and to a lesser extend activated CD8-positive T-cells and natural killer (NK) cells that plays pivotal roles in the immune response and tolerance. Binds to a receptor complex composed of either the high-affinity trimeric IL-2R (IL2RA/CD25, IL2RB/CD122 and IL2RG/CD132) or the low-affinity dimeric IL-2R (IL2RB and IL2RG). Interaction with the receptor leads to oligomerization and conformation changes in the IL-2R subunits resulting in downstream signaling starting with phosphorylation of JAK1 and JAK3. In turn, JAK1 and JAK3 phosphorylate the receptor to form a docking site leading to the phosphorylation of several substrates including STAT5. This process leads to activation of several pathways including STAT, phosphoinositide-3-kinase/PI3K and mitogen-activated protein kinase/MAPK pathways. Functions as a T-cell growth factor and can increase NK-cell cytolytic activity as well. Promotes strong proliferation of activated B-cells and subsequently immunoglobulin production. Plays a pivotal role in regulating the adaptive immune system by controlling the survival and proliferation of regulatory T-cells, which are required for the maintenance of immune tolerance. Moreover, participates in the differentiation and homeostasis of effector T-cell subsets, including Th1, Th2, Th17 as well as memory CD8-positive T-cells. The sequence is that of Interleukin-2 (IL2) from Oryctolagus cuniculus (Rabbit).